Here is a 479-residue protein sequence, read N- to C-terminus: ATP synthase subunit beta (479 aa).

153–160 is a binding site for ATP; it reads GGAGVGKT.

Belongs to the ATPase alpha/beta chains family. In terms of assembly, F-type ATPases have 2 components, CF(1) - the catalytic core - and CF(0) - the membrane proton channel. CF(1) has five subunits: alpha(3), beta(3), gamma(1), delta(1), epsilon(1). CF(0) has three main subunits: a(1), b(2) and c(9-12). The alpha and beta chains form an alternating ring which encloses part of the gamma chain. CF(1) is attached to CF(0) by a central stalk formed by the gamma and epsilon chains, while a peripheral stalk is formed by the delta and b chains.

It is found in the cell membrane. It carries out the reaction ATP + H2O + 4 H(+)(in) = ADP + phosphate + 5 H(+)(out). Functionally, produces ATP from ADP in the presence of a proton gradient across the membrane. The catalytic sites are hosted primarily by the beta subunits. In Lactobacillus delbrueckii subsp. bulgaricus (strain ATCC BAA-365 / Lb-18), this protein is ATP synthase subunit beta.